Here is a 310-residue protein sequence, read N- to C-terminus: Methionyl-tRNA formyltransferase (310 aa).

111-114 (SILP) is a (6S)-5,6,7,8-tetrahydrofolate binding site.

This sequence belongs to the Fmt family.

The catalysed reaction is L-methionyl-tRNA(fMet) + (6R)-10-formyltetrahydrofolate = N-formyl-L-methionyl-tRNA(fMet) + (6S)-5,6,7,8-tetrahydrofolate + H(+). Attaches a formyl group to the free amino group of methionyl-tRNA(fMet). The formyl group appears to play a dual role in the initiator identity of N-formylmethionyl-tRNA by promoting its recognition by IF2 and preventing the misappropriation of this tRNA by the elongation apparatus. The polypeptide is Methionyl-tRNA formyltransferase (Finegoldia magna (strain ATCC 29328 / DSM 20472 / WAL 2508) (Peptostreptococcus magnus)).